Consider the following 159-residue polypeptide: 6,7-dimethyl-8-ribityllumazine synthase (159 aa).

5-amino-6-(D-ribitylamino)uracil is bound by residues Tyr-23, 58 to 60, and 82 to 84; these read AYE and TII. Residue His-90 is the Proton donor of the active site. Residue Ile-115 participates in 5-amino-6-(D-ribitylamino)uracil binding. Arg-129 lines the (2S)-2-hydroxy-3-oxobutyl phosphate pocket.

This sequence belongs to the DMRL synthase family. In terms of assembly, forms an icosahedral capsid composed of 60 subunits, arranged as a dodecamer of pentamers.

The enzyme catalyses (2S)-2-hydroxy-3-oxobutyl phosphate + 5-amino-6-(D-ribitylamino)uracil = 6,7-dimethyl-8-(1-D-ribityl)lumazine + phosphate + 2 H2O + H(+). The protein operates within cofactor biosynthesis; riboflavin biosynthesis; riboflavin from 2-hydroxy-3-oxobutyl phosphate and 5-amino-6-(D-ribitylamino)uracil: step 1/2. In terms of biological role, catalyzes the formation of 6,7-dimethyl-8-ribityllumazine by condensation of 5-amino-6-(D-ribitylamino)uracil with 3,4-dihydroxy-2-butanone 4-phosphate. This is the penultimate step in the biosynthesis of riboflavin. The chain is 6,7-dimethyl-8-ribityllumazine synthase from Buchnera aphidicola subsp. Baizongia pistaciae (strain Bp).